The chain runs to 323 residues: tRNA dimethylallyltransferase (323 aa).

Gly-12–Thr-19 contributes to the ATP binding site. Thr-14–Thr-19 is a substrate binding site. Interaction with substrate tRNA regions lie at residues Asp-37–Leu-40 and Gln-161–Arg-165.

It belongs to the IPP transferase family. In terms of assembly, monomer. It depends on Mg(2+) as a cofactor.

The catalysed reaction is adenosine(37) in tRNA + dimethylallyl diphosphate = N(6)-dimethylallyladenosine(37) in tRNA + diphosphate. Catalyzes the transfer of a dimethylallyl group onto the adenine at position 37 in tRNAs that read codons beginning with uridine, leading to the formation of N6-(dimethylallyl)adenosine (i(6)A). This is tRNA dimethylallyltransferase from Pseudomonas putida (strain W619).